A 130-amino-acid polypeptide reads, in one-letter code: Astrocytic phosphoprotein PEA-15 (130 aa).

Residues 3 to 81 (EYGTLLQDLT…RPDLLTMVVD (79 aa)) enclose the DED domain. A phosphoserine mark is found at Ser-61, Ser-90, Ser-104, and Ser-116. Residues 98–107 (KLTRIPSAKK) form a microtubule-binding region. The microtubule-binding stretch occupies residues 122 to 129 (KLAPPPKK).

In terms of assembly, binds RPS6KA3, MAPK3 and MAPK1. Transient interaction with PLD1 and PLD2. Interacts with CASP8 and FADD. Phosphorylated by protein kinase C and calcium-calmodulin-dependent protein kinase. These phosphorylation events are modulated by neurotransmitters or hormones. Ubiquitously expressed. Most abundant in tissues such as heart, brain, muscle and adipose tissue which utilize glucose as an energy source. Lower expression in glucose-producing tissues. Higher levels of expression are found in tissues from individuals with type 2 diabetes than in controls.

Its subcellular location is the cytoplasm. Its function is as follows. Blocks Ras-mediated inhibition of integrin activation and modulates the ERK MAP kinase cascade. Inhibits RPS6KA3 activities by retaining it in the cytoplasm. Inhibits both TNFRSF6- and TNFRSF1A-mediated CASP8 activity and apoptosis. Regulates glucose transport by controlling both the content of SLC2A1 glucose transporters on the plasma membrane and the insulin-dependent trafficking of SLC2A4 from the cell interior to the surface. In Homo sapiens (Human), this protein is Astrocytic phosphoprotein PEA-15 (PEA15).